The following is a 294-amino-acid chain: tRNA-uridine aminocarboxypropyltransferase 1 (294 aa).

The interval 158-185 is disordered; that stretch reads DMQNDSSCEPSLKRPKCSQQYDKSKNEG. Positions 202 to 205 match the DXTW motif; it reads DSTW.

It belongs to the TDD superfamily. DTWD1 family.

It is found in the nucleus. It carries out the reaction a uridine in tRNA + S-adenosyl-L-methionine = a 3-[(3S)-3-amino-3-carboxypropyl]uridine in tRNA + S-methyl-5'-thioadenosine + H(+). In terms of biological role, catalyzes the formation of 3-(3-amino-3-carboxypropyl)uridine (acp3U) at position 20 in the D-loop of several cytoplasmic tRNAs (acp3U(20)). The sequence is that of tRNA-uridine aminocarboxypropyltransferase 1 from Xenopus tropicalis (Western clawed frog).